Consider the following 570-residue polypeptide: Urease subunit alpha (570 aa).

Positions 131-570 constitute a Urease domain; that stretch reads GGMDSHIHFI…LPMAQRYFLF (440 aa). Residues histidine 136, histidine 138, and lysine 219 each contribute to the Ni(2+) site. An N6-carboxylysine modification is found at lysine 219. Histidine 221 is a substrate binding site. The Ni(2+) site is built by histidine 248 and histidine 274. Catalysis depends on histidine 322, which acts as the Proton donor. Aspartate 362 serves as a coordination point for Ni(2+).

The protein belongs to the metallo-dependent hydrolases superfamily. Urease alpha subunit family. In terms of assembly, heterotrimer of UreA (gamma), UreB (beta) and UreC (alpha) subunits. Three heterotrimers associate to form the active enzyme. It depends on Ni cation as a cofactor. In terms of processing, carboxylation allows a single lysine to coordinate two nickel ions.

It localises to the cytoplasm. It carries out the reaction urea + 2 H2O + H(+) = hydrogencarbonate + 2 NH4(+). The protein operates within nitrogen metabolism; urea degradation; CO(2) and NH(3) from urea (urease route): step 1/1. The chain is Urease subunit alpha from Sinorhizobium medicae (strain WSM419) (Ensifer medicae).